A 579-amino-acid chain; its full sequence is 2-isopropylmalate synthase (579 aa).

The 276-residue stretch at 33-308 (PRWLSTDLRD…DPGIDFSDIN (276 aa)) folds into the Pyruvate carboxyltransferase domain. Residues Asp-42, His-247, His-249, and Asn-283 each contribute to the Mg(2+) site. The interval 450–579 (SSDLPVPLAS…IVAPLVAAGR (130 aa)) is regulatory domain.

This sequence belongs to the alpha-IPM synthase/homocitrate synthase family. LeuA type 2 subfamily. In terms of assembly, homodimer. It depends on Mg(2+) as a cofactor.

It localises to the cytoplasm. The enzyme catalyses 3-methyl-2-oxobutanoate + acetyl-CoA + H2O = (2S)-2-isopropylmalate + CoA + H(+). It participates in amino-acid biosynthesis; L-leucine biosynthesis; L-leucine from 3-methyl-2-oxobutanoate: step 1/4. Catalyzes the condensation of the acetyl group of acetyl-CoA with 3-methyl-2-oxobutanoate (2-ketoisovalerate) to form 3-carboxy-3-hydroxy-4-methylpentanoate (2-isopropylmalate). In Streptosporangium roseum (strain ATCC 12428 / DSM 43021 / JCM 3005 / KCTC 9067 / NCIMB 10171 / NRRL 2505 / NI 9100), this protein is 2-isopropylmalate synthase.